Reading from the N-terminus, the 352-residue chain is Molybdenum import ATP-binding protein ModC (352 aa).

The 229-residue stretch at 1–229 folds into the ABC transporter domain; the sequence is MLELNFSQTL…SVMNPWLPKE (229 aa). Residue 31–38 participates in ATP binding; that stretch reads GVSGAGKT. Residues 289–352 form the Mop domain; that stretch reads QTSIRNVLRA…AQIKSVSITA (64 aa).

This sequence belongs to the ABC transporter superfamily. Molybdate importer (TC 3.A.1.8) family. The complex is composed of two ATP-binding proteins (ModC), two transmembrane proteins (ModB) and a solute-binding protein (ModA).

It localises to the cell inner membrane. It catalyses the reaction molybdate(out) + ATP + H2O = molybdate(in) + ADP + phosphate + H(+). Functionally, part of the ABC transporter complex ModABC involved in molybdenum import. Responsible for energy coupling to the transport system. In Escherichia coli O6:H1 (strain CFT073 / ATCC 700928 / UPEC), this protein is Molybdenum import ATP-binding protein ModC.